Here is a 461-residue protein sequence, read N- to C-terminus: Photosystem II CP43 reaction center protein (461 aa).

The propeptide occupies 1 to 2 (ME). At Thr3 the chain carries N-acetylthreonine. Thr3 carries the phosphothreonine modification. 5 helical membrane-spanning segments follow: residues 57–81 (LFEV…PHLA), 122–143 (LIGP…KDKN), 166–188 (KAMY…RVIT), 243–263 (KPWA…LSYS), and 279–300 (WFNN…ASQS). Glu355 is a binding site for [CaMn4O5] cluster. Residues 435-459 (RARAAAAGFEKGIDRDNEPVLSMKP) form a helical membrane-spanning segment.

This sequence belongs to the PsbB/PsbC family. PsbC subfamily. PSII is composed of 1 copy each of membrane proteins PsbA, PsbB, PsbC, PsbD, PsbE, PsbF, PsbH, PsbI, PsbJ, PsbK, PsbL, PsbM, PsbT, PsbX, PsbY, PsbZ, Psb30/Ycf12, at least 3 peripheral proteins of the oxygen-evolving complex and a large number of cofactors. It forms dimeric complexes. Requires Binds multiple chlorophylls and provides some of the ligands for the Ca-4Mn-5O cluster of the oxygen-evolving complex. It may also provide a ligand for a Cl- that is required for oxygen evolution. PSII binds additional chlorophylls, carotenoids and specific lipids. as cofactor.

Its subcellular location is the plastid. It is found in the chloroplast thylakoid membrane. One of the components of the core complex of photosystem II (PSII). It binds chlorophyll and helps catalyze the primary light-induced photochemical processes of PSII. PSII is a light-driven water:plastoquinone oxidoreductase, using light energy to abstract electrons from H(2)O, generating O(2) and a proton gradient subsequently used for ATP formation. In Tupiella akineta (Green alga), this protein is Photosystem II CP43 reaction center protein.